A 1038-amino-acid polypeptide reads, in one-letter code: TonB-dependent receptor P39 (1038 aa).

The first 39 residues, 1 to 39, serve as a signal peptide directing secretion; the sequence is MFKQKLKMKPKIKRNCTFSGLAFILMLLFSSFTVNNLNA. The TonB box motif lies at 120–127; that stretch reads DEVVVIGY. Residues 131 to 243 form the TBDR plug domain; sequence KRADVIGAVG…ANGVVLITTK (113 aa). One can recognise a TBDR beta-barrel domain in the interval 249 to 1038; the sequence is FPKMTVDYIS…EIVIGLNVEF (790 aa). Positions 1021–1038 match the TonB C-terminal box motif; it reads SLRYPNQTEIVIGLNVEF.

It belongs to the TonB-dependent receptor family.

It is found in the cell outer membrane. TonB-dependent receptor probably involved in ulvan degradation. Ulvan is the main polysaccharide component of the Ulvales (green seaweed) cell wall. It is composed of disaccharide building blocks comprising 3-sulfated rhamnose (Rha3S) linked to D-glucuronic acid (GlcA), L-iduronic acid (IduA), or D-xylose (Xyl). The TonB-dependent receptor may mediate transport of ulvan oligosaccharides from the surface of the outer membrane to the periplasm for subsequent degradation. The polypeptide is TonB-dependent receptor P39 (Formosa agariphila (strain DSM 15362 / KCTC 12365 / LMG 23005 / KMM 3901 / M-2Alg 35-1)).